The following is a 637-amino-acid chain: Chaperone protein DnaK (637 aa).

T198 is modified (phosphothreonine; by autocatalysis). The disordered stretch occupies residues 597–637 (MYQQQAEGDAARDAAQDAAKDDVVDAEFTEVDDDKNDKKSA). Positions 605-619 (DAARDAAQDAAKDDV) are enriched in basic and acidic residues. Acidic residues predominate over residues 620 to 630 (VDAEFTEVDDD).

This sequence belongs to the heat shock protein 70 family.

In terms of biological role, acts as a chaperone. The chain is Chaperone protein DnaK from Afipia carboxidovorans (strain ATCC 49405 / DSM 1227 / KCTC 32145 / OM5) (Oligotropha carboxidovorans).